The following is a 212-amino-acid chain: uncharacterized protein (212 aa).

This is an uncharacterized protein from Mycobacterium tuberculosis (strain ATCC 25618 / H37Rv).